Consider the following 206-residue polypeptide: Proteasome subunit beta type-2 (206 aa).

This sequence belongs to the peptidase T1B family. The 26S proteasome consists of a 20S proteasome core and two 19S regulatory subunits. The 20S proteasome core is composed of 28 subunits that are arranged in four stacked rings, resulting in a barrel-shaped structure. The two end rings are each formed by seven alpha subunits, and the two central rings are each formed by seven beta subunits. The catalytic chamber with the active sites is on the inside of the barrel.

It localises to the cytoplasm. The protein resides in the nucleus. In terms of biological role, non-catalytic component of the proteasome, a multicatalytic proteinase complex which is characterized by its ability to cleave peptides with Arg, Phe, Tyr, Leu, and Glu adjacent to the leaving group at neutral or slightly basic pH. The proteasome has an ATP-dependent proteolytic activity. The chain is Proteasome subunit beta type-2 (PSB4) from Trypanosoma brucei brucei.